A 61-amino-acid polypeptide reads, in one-letter code: Small ribosomal subunit protein uS14 (61 aa).

Positions 24, 27, 40, and 43 each coordinate Zn(2+).

The protein belongs to the universal ribosomal protein uS14 family. Zinc-binding uS14 subfamily. Part of the 30S ribosomal subunit. Contacts proteins S3 and S10. The cofactor is Zn(2+).

Its function is as follows. Binds 16S rRNA, required for the assembly of 30S particles and may also be responsible for determining the conformation of the 16S rRNA at the A site. This is Small ribosomal subunit protein uS14 from Rhodococcus erythropolis (strain PR4 / NBRC 100887).